A 103-amino-acid polypeptide reads, in one-letter code: Small ribosomal subunit protein uS10 (103 aa).

The protein belongs to the universal ribosomal protein uS10 family. As to quaternary structure, part of the 30S ribosomal subunit.

In terms of biological role, involved in the binding of tRNA to the ribosomes. The sequence is that of Small ribosomal subunit protein uS10 from Desulfatibacillum aliphaticivorans.